Reading from the N-terminus, the 650-residue chain is Amyloid beta precursor like protein 1 (650 aa).

A signal peptide spans 1–38; sequence MGPASPAARGLSRRPGQPPLPLLLPLLLLLLRAQPAIG. Residues 39–580 lie on the Extracellular side of the membrane; that stretch reads SLAGGSPGAA…APAGTGVSRE (542 aa). Residues 50–146 are GFLD subdomain; it reads APGSAQVAGL…PFRCLPGEFV (97 aa). In terms of domain architecture, E1 spans 50–212; that stretch reads APGSAQVAGL…RGVEYVCCPP (163 aa). Cystine bridges form between Cys-60/Cys-84, Cys-95/Cys-140, Cys-120/Cys-128, Cys-156/Cys-210, Cys-167/Cys-197, and Cys-181/Cys-209. Residues 154–212 form a cuBD subdomain region; it reads EGCRFLHQERMDQCESSTRRHQEAQEACSSQGLILHGSGMLLPCGSDRFRGVEYVCCPP. A Cu(2+)-binding site is contributed by His-174. Zn(2+) is bound by residues Glu-206, Cys-209, and Cys-210. The interval 214–287 is disordered; the sequence is GTPDPSGTAV…LAVVGKVTPT (74 aa). O-linked (GalNAc...) threonine glycosylation is present at Thr-215. Ser-227 carries O-linked (GalNAc...) serine glycosylation. An O-linked (GalNAc...) threonine glycan is attached at Thr-228. The tract at residues 285-305 is O-glycosylated at three sites; the sequence is TPTPRPTDGVDIYFGMPGEIS. The 192-residue stretch at 293 to 484 folds into the E2 domain; that stretch reads GVDIYFGMPG…QELRPQIQEL (192 aa). 2 heparin-binding regions span residues 310–342 and 410–441; these read FLRA…SKNL and LLAL…DPEK. Asn-337 carries N-linked (GlcNAc...) asparagine glycosylation. Residues 442–459 form a collagen-binding region; that stretch reads AQQMRFQVHTHLQVIEER. Residue Asn-461 is glycosylated (N-linked (GlcNAc...) asparagine). Residues 492-546 form a disordered region; it reads PSELEAPAPGGSSEDKGGLQPPDSKDDTPMTLPKGSTEQDAASPEKEKMNPLEQY. Basic and acidic residues-rich tracts occupy residues 504–519 and 534–546; these read SEDK…KDDT and SPEK…LEQY. Residue Asn-551 is glycosylated (N-linked (GlcNAc...) asparagine). His-561 lines the Cu(2+) pocket. His-561 is a Zn(2+) binding site. Residues 581–603 traverse the membrane as a helical segment; sequence AVSGLLIMGAGGGSLIVLSMLLL. The Basolateral sorting signal signature appears at 604-615; that stretch reads RRKKPYGAISHG. Topologically, residues 604–650 are cytoplasmic; that stretch reads RRKKPYGAISHGVVEVDPMLTLEEQQLRELQRHGYENPTYRFLEERP. The interval 632–649 is interaction with DAB1; it reads ELQRHGYENPTYRFLEER. The segment at 636–650 is interaction with DAB2; that stretch reads HGYENPTYRFLEERP. A Clathrin-binding motif is present at residues 640-643; the sequence is NPTY. Positions 640 to 643 match the NPXY motif; contains endocytosis signal motif; it reads NPTY.

This sequence belongs to the APP family. In terms of assembly, monomer and homodimer. Heparin binding promotes homodimerization. Binds, via its C-terminus, to the PID domain of several cytoplasmic proteins, including APBB and APBA family members, MAPK8IP1 and DAB1. Binding to Dab1 inhibits its serine phosphorylation. Interacts with CPEB1. Interacts (via NPXY motif) with DAB2 (via PID domain); the interaction is impaired by tyrosine phosphorylation of the NPXY motif. Interacts (via NPXY motif) with DAB1. Post-translationally, proteolytically cleaved by caspases during neuronal apoptosis. Cleaved, in vitro, at Asp-620 by caspase-3. In terms of processing, N- and O-glycosylated. O-glycosylation with core 1 or possibly core 8 glycans. Glycosylation on Ser-227 is the preferred site to Thr-228. In terms of tissue distribution, expressed in the cerebral cortex where it is localized to the postsynaptic density (PSD).

It localises to the cell membrane. The protein resides in the cytoplasm. Functionally, may play a role in postsynaptic function. The C-terminal gamma-secretase processed fragment, ALID1, activates transcription activation through APBB1 (Fe65) binding. Couples to JIP signal transduction through C-terminal binding. May interact with cellular G-protein signaling pathways. Can regulate neurite outgrowth through binding to components of the extracellular matrix such as heparin and collagen I. Its function is as follows. The gamma-CTF peptide, C30, is a potent enhancer of neuronal apoptosis. The sequence is that of Amyloid beta precursor like protein 1 (APLP1) from Homo sapiens (Human).